The sequence spans 211 residues: Cytidylate kinase (211 aa).

Residue 9-17 (GPAAAGKGT) coordinates ATP.

The protein belongs to the cytidylate kinase family. Type 1 subfamily.

The protein localises to the cytoplasm. The catalysed reaction is CMP + ATP = CDP + ADP. It carries out the reaction dCMP + ATP = dCDP + ADP. The chain is Cytidylate kinase from Paramagnetospirillum magneticum (strain ATCC 700264 / AMB-1) (Magnetospirillum magneticum).